Consider the following 669-residue polypeptide: Protein adenylyltransferase SelO, mitochondrial (669 aa).

The transit peptide at 1–115 directs the protein to the mitochondrion; the sequence is MAVYRAALGA…LGLGAPPARE (115 aa). ATP contacts are provided by Gly-153, Gly-155, Lys-176, Asp-188, Gly-189, Arg-246, and Arg-253. Residue Asp-338 is the Proton acceptor of the active site. Mg(2+) is bound by residues Asn-339 and Asp-348. An ATP-binding site is contributed by Asp-348. The interval 634–654 is disordered; sequence ATDAEATEADGADGRQRSYSS. At Thr-635 the chain carries Phosphothreonine. Position 653 is a phosphoserine (Ser-653). Sec-667 is a non-standard amino acid (selenocysteine).

This sequence belongs to the SELO family. It depends on Mg(2+) as a cofactor.

It is found in the mitochondrion. The catalysed reaction is L-tyrosyl-[protein] + ATP = O-(5'-adenylyl)-L-tyrosyl-[protein] + diphosphate. It catalyses the reaction L-threonyl-[protein] + ATP = 3-O-(5'-adenylyl)-L-threonyl-[protein] + diphosphate. It carries out the reaction L-seryl-[protein] + ATP = 3-O-(5'-adenylyl)-L-seryl-[protein] + diphosphate. In terms of biological role, catalyzes the transfer of adenosine 5'-monophosphate (AMP) to Ser, Thr and Tyr residues of target proteins (AMPylation). May be a redox-active mitochondrial selenoprotein which interacts with a redox target protein. This chain is Protein adenylyltransferase SelO, mitochondrial, found in Homo sapiens (Human).